The following is a 677-amino-acid chain: UPF0652 protein (677 aa).

The B box-type; atypical zinc finger occupies 38–84 (ETPGMCCECTDQPAEVVCLQCQDELCTVCSTSLHRRGSRRSHIFKNK). Positions 43, 46, 66, and 71 each coordinate Zn(2+). The span at 91–111 (YDELNKRDRQPPLHGKEDEKV) shows a compositional bias: basic and acidic residues. Disordered stretches follow at residues 91 to 142 (YDEL…NNNI) and 156 to 192 (LNPL…IDED). Positions 113–126 (NNNNNNNNTNNTNN) are enriched in low complexity. Over residues 163-178 (HTNQQRNGGGSNNHQI) the composition is skewed to polar residues.

The protein belongs to the UPF0652 family.

In Dictyostelium discoideum (Social amoeba), this protein is UPF0652 protein.